Here is a 145-residue protein sequence, read N- to C-terminus: 3-hydroxyacyl-[acyl-carrier-protein] dehydratase FabZ (145 aa).

The active site involves histidine 49.

The protein belongs to the thioester dehydratase family. FabZ subfamily.

Its subcellular location is the cytoplasm. It carries out the reaction a (3R)-hydroxyacyl-[ACP] = a (2E)-enoyl-[ACP] + H2O. Involved in unsaturated fatty acids biosynthesis. Catalyzes the dehydration of short chain beta-hydroxyacyl-ACPs and long chain saturated and unsaturated beta-hydroxyacyl-ACPs. In Rickettsia bellii (strain RML369-C), this protein is 3-hydroxyacyl-[acyl-carrier-protein] dehydratase FabZ.